The following is a 252-amino-acid chain: Glucosamine-6-phosphate deaminase (252 aa).

Asp67 functions as the Proton acceptor; for enolization step in the catalytic mechanism. The active-site For ring-opening step is the Asn137. Catalysis depends on His139, which acts as the Proton acceptor; for ring-opening step. Glu144 functions as the For ring-opening step in the catalytic mechanism.

Belongs to the glucosamine/galactosamine-6-phosphate isomerase family. NagB subfamily.

It carries out the reaction alpha-D-glucosamine 6-phosphate + H2O = beta-D-fructose 6-phosphate + NH4(+). It participates in amino-sugar metabolism; N-acetylneuraminate degradation; D-fructose 6-phosphate from N-acetylneuraminate: step 5/5. Its function is as follows. Catalyzes the reversible isomerization-deamination of glucosamine 6-phosphate (GlcN6P) to form fructose 6-phosphate (Fru6P) and ammonium ion. The chain is Glucosamine-6-phosphate deaminase from Staphylococcus aureus (strain Mu3 / ATCC 700698).